We begin with the raw amino-acid sequence, 422 residues long: Ferrochelatase, mitochondrial (422 aa).

A mitochondrion-targeting transit peptide spans 1-53 (MLSASANMAAALRAAGALLREPLVHGSSRACQPWRCQSGAAVAATTEKVHHAK). Lys-56 bears the N6-acetyllysine mark. Protoporphyrin IX contacts are provided by Arg-114, Tyr-122, and Ser-129. N6-succinyllysine is present on Lys-137. Cys-195 contacts [2Fe-2S] cluster. The active site involves His-229. An N6-acetyllysine; alternate modification is found at Lys-289. At Lys-289 the chain carries N6-succinyllysine; alternate. Residue Asp-382 is part of the active site. 3 residues coordinate [2Fe-2S] cluster: Cys-402, Cys-405, and Cys-410. Residue Lys-414 is modified to N6-acetyllysine; alternate. The residue at position 414 (Lys-414) is an N6-succinyllysine; alternate.

Belongs to the ferrochelatase family. Homodimer. Homotetramer. Interaction with PGRMC1; the interaction results in decreased FECH activity. Interacts with ABCB10 and SLC25A37; this interaction forms an oligomeric complex. Forms a complex with ABCB7 and ABCB10, where a dimeric FECH bridges ABCB7 and ABCB10 homodimers; this complex may be required for cellular iron homeostasis, mitochondrial function and heme biosynthesis. Interacts with ABCB7 and ABCB10. The cofactor is [2Fe-2S] cluster. In terms of tissue distribution, erythroid and hepatic cells.

The protein resides in the mitochondrion inner membrane. The enzyme catalyses heme b + 2 H(+) = protoporphyrin IX + Fe(2+). It participates in porphyrin-containing compound metabolism; protoheme biosynthesis; protoheme from protoporphyrin-IX: step 1/1. Catalyzes the ferrous insertion into protoporphyrin IX. The chain is Ferrochelatase, mitochondrial from Mus musculus (Mouse).